Here is a 226-residue protein sequence, read N- to C-terminus: ATP synthase F(0) complex subunit a (226 aa).

6 helical membrane passes run 12–32, 68–88, 97–117, 138–158, 164–184, and 189–209; these read PTVLGLPAAILVILFPPLLVP, WSLMLTSLIIFIASTNLLGLF, QLSMNLAMAIPLWASTVAMGL, IPMLIIIETISLFIQPLALAV, ITAGHLLMHLIGSATLTMLTI, and TLITLTILTLLTILEIAVALI.

The protein belongs to the ATPase A chain family. In terms of assembly, component of the ATP synthase complex composed at least of ATP5F1A/subunit alpha, ATP5F1B/subunit beta, ATP5MC1/subunit c (homooctomer), MT-ATP6/subunit a, MT-ATP8/subunit 8, ATP5ME/subunit e, ATP5MF/subunit f, ATP5MG/subunit g, ATP5MK/subunit k, ATP5MJ/subunit j, ATP5F1C/subunit gamma, ATP5F1D/subunit delta, ATP5F1E/subunit epsilon, ATP5PF/subunit F6, ATP5PB/subunit b, ATP5PD/subunit d, ATP5PO/subunit OSCP. ATP synthase complex consists of a soluble F(1) head domain (subunits alpha(3) and beta(3)) - the catalytic core - and a membrane F(0) domain - the membrane proton channel (subunits c, a, 8, e, f, g, k and j). These two domains are linked by a central stalk (subunits gamma, delta, and epsilon) rotating inside the F1 region and a stationary peripheral stalk (subunits F6, b, d, and OSCP). Interacts with DNAJC30; interaction is direct.

It localises to the mitochondrion inner membrane. The catalysed reaction is H(+)(in) = H(+)(out). Functionally, subunit a, of the mitochondrial membrane ATP synthase complex (F(1)F(0) ATP synthase or Complex V) that produces ATP from ADP in the presence of a proton gradient across the membrane which is generated by electron transport complexes of the respiratory chain. ATP synthase complex consist of a soluble F(1) head domain - the catalytic core - and a membrane F(1) domain - the membrane proton channel. These two domains are linked by a central stalk rotating inside the F(1) region and a stationary peripheral stalk. During catalysis, ATP synthesis in the catalytic domain of F(1) is coupled via a rotary mechanism of the central stalk subunits to proton translocation. With the subunit c (ATP5MC1), forms the proton-conducting channel in the F(0) domain, that contains two crucial half-channels (inlet and outlet) that facilitate proton movement from the mitochondrial intermembrane space (IMS) into the matrix. Protons are taken up via the inlet half-channel and released through the outlet half-channel, following a Grotthuss mechanism. In Pongo pygmaeus (Bornean orangutan), this protein is ATP synthase F(0) complex subunit a.